Consider the following 88-residue polypeptide: Small ribosomal subunit protein bS20 (88 aa).

This sequence belongs to the bacterial ribosomal protein bS20 family.

Functionally, binds directly to 16S ribosomal RNA. The sequence is that of Small ribosomal subunit protein bS20 from Methylocella silvestris (strain DSM 15510 / CIP 108128 / LMG 27833 / NCIMB 13906 / BL2).